The following is a 693-amino-acid chain: Oxysterol-binding protein-related protein 2B (693 aa).

Polar residues predominate over residues 1–15 (MPLTRSKSLPATENG). The interval 1–22 (MPLTRSKSLPATENGGSDRETL) is disordered. One can recognise a PH domain in the interval 25-154 (GRSVAGILYK…WLQALASTRG (130 aa)). Positions 207–239 (EVQEQIKLLHEERKKLLDALRQLEMANLEAEAS) form a coiled coil. 2 disordered regions span residues 256–298 (LGRG…GEPD) and 600–639 (EKLP…RMSR). Residues 274–284 (QEFEDISEEDE) are compositionally biased toward acidic residues. 2 stretches are compositionally biased toward basic and acidic residues: residues 285–294 (ASFHDTKESF) and 600–635 (EKLP…ERRQ). The stretch at 612-643 (DQRHLENGEYEKANEEKQRLERRQRMSRQIQE) forms a coiled coil.

The protein belongs to the OSBP family. Expressed in roots, leaves, stems and flowers.

Its function is as follows. May be involved in the transport of sterols. The chain is Oxysterol-binding protein-related protein 2B (ORP2B) from Arabidopsis thaliana (Mouse-ear cress).